The sequence spans 525 residues: GMP synthase [glutamine-hydrolyzing] (525 aa).

A Glutamine amidotransferase type-1 domain is found at 8-206 (PLLILDFGSQ…VVDICKASTD (199 aa)). Cys85 serves as the catalytic Nucleophile. Active-site residues include His180 and Glu182. One can recognise a GMPS ATP-PPase domain in the interval 207–400 (WTPEHIIDEA…LGLPHDMVYR (194 aa)). Position 234–240 (234–240 (SGGVDSS)) interacts with ATP.

Homodimer.

It catalyses the reaction XMP + L-glutamine + ATP + H2O = GMP + L-glutamate + AMP + diphosphate + 2 H(+). Its pathway is purine metabolism; GMP biosynthesis; GMP from XMP (L-Gln route): step 1/1. Its function is as follows. Catalyzes the synthesis of GMP from XMP. This is GMP synthase [glutamine-hydrolyzing] from Legionella pneumophila subsp. pneumophila (strain Philadelphia 1 / ATCC 33152 / DSM 7513).